A 154-amino-acid polypeptide reads, in one-letter code: Sec-independent protein translocase protein TatB (154 aa).

A helical membrane pass occupies residues 1-21 (MIDIGITKLAIIGGIALIVIG).

The protein belongs to the TatB family. In terms of assembly, the Tat system comprises two distinct complexes: a TatABC complex, containing multiple copies of TatA, TatB and TatC subunits, and a separate TatA complex, containing only TatA subunits. Substrates initially bind to the TatABC complex, which probably triggers association of the separate TatA complex to form the active translocon.

The protein resides in the cell inner membrane. Functionally, part of the twin-arginine translocation (Tat) system that transports large folded proteins containing a characteristic twin-arginine motif in their signal peptide across membranes. Together with TatC, TatB is part of a receptor directly interacting with Tat signal peptides. TatB may form an oligomeric binding site that transiently accommodates folded Tat precursor proteins before their translocation. The protein is Sec-independent protein translocase protein TatB of Albidiferax ferrireducens (strain ATCC BAA-621 / DSM 15236 / T118) (Rhodoferax ferrireducens).